A 388-amino-acid polypeptide reads, in one-letter code: Succinate--CoA ligase [ADP-forming] subunit beta (388 aa).

The ATP-grasp domain occupies 9-244 (KSLFAEYGLP…PSQDDAREAH (236 aa)). Residues Lys46, 53–55 (GRG), Glu99, Thr102, and Glu107 contribute to the ATP site. 2 residues coordinate Mg(2+): Asn199 and Asp213. Substrate contacts are provided by residues Asn264 and 321–323 (GIV).

Belongs to the succinate/malate CoA ligase beta subunit family. Heterotetramer of two alpha and two beta subunits. It depends on Mg(2+) as a cofactor.

The enzyme catalyses succinate + ATP + CoA = succinyl-CoA + ADP + phosphate. The catalysed reaction is GTP + succinate + CoA = succinyl-CoA + GDP + phosphate. Its pathway is carbohydrate metabolism; tricarboxylic acid cycle; succinate from succinyl-CoA (ligase route): step 1/1. Succinyl-CoA synthetase functions in the citric acid cycle (TCA), coupling the hydrolysis of succinyl-CoA to the synthesis of either ATP or GTP and thus represents the only step of substrate-level phosphorylation in the TCA. The beta subunit provides nucleotide specificity of the enzyme and binds the substrate succinate, while the binding sites for coenzyme A and phosphate are found in the alpha subunit. This Shewanella baltica (strain OS195) protein is Succinate--CoA ligase [ADP-forming] subunit beta.